The sequence spans 755 residues: MKFNQFSYIPVSPETAYQELRSLGFEVSLDASAKANFESFVRKYFLFFEDTDLALKNWIADPETDLLSFFQSDRPLTAEVFGLVALQLLGFVPNVDFTDSVAFLEKMAFPIAFDGSLNNLHQLLATRTQSGNTLIDQLVAQDLIPISNDYVFFNGKSLATFDTNQLHREVVYVETPVDTDKDGLLDLVKVTILRPNVDFPVPAMMTASPYQQGTNEPSSDKLTHKMEGDLLVKPAGKISLSRPEIKAPEADLTPINPVTKAEERFAHTDTYTLNDYMLARGVASIYVSGVGTFNSEGFMTSGDYQQVLAYKAVIDWLNGRARAFTSRSRQHTITADWASGKVTTTGLSYLGTMSNALATTGVDGLEMVIAEAGISSWYDYYRENGLLVSPGGYPGEDLDTLTEFTYSRALLAGEYLRHQKDYEAYLNELSTDIDRKHGDYNQFWHDRNYVQFADRVKATVVFTHGSQDWNVKPINVYQMFRALPKSLEKHLFFHNGAHVYMNAWQSIDFRESMNALICQKLLGLDNGYTLPTVIWQNNQSEQTWEVLDNFGHDNGKHIQLGKSEASIANHYEEEIFAKYGKAYQSFKDDLFMDKANAITLDFELDQDIQINGRVHLELRVKSSTNRGLISAQVLEMGDKKYLAPIPAPKRMSLDNGRLFKEEALRELPFKQAKYRVITKGHLNLQNRKDLLSIENVTPNEWMTIGLDLQPTIYKLNKGDKLRLVLYTTDFEHTIRDNSDYEVTVDLSQSKMTLPY.

Active-site charge relay system residues include serine 348, aspartate 468, and histidine 498.

The protein belongs to the peptidase S15 family. As to quaternary structure, homodimer.

It localises to the cytoplasm. The catalysed reaction is Hydrolyzes Xaa-Pro-|- bonds to release unblocked, N-terminal dipeptides from substrates including Ala-Pro-|-p-nitroanilide and (sequentially) Tyr-Pro-|-Phe-Pro-|-Gly-Pro-|-Ile.. Removes N-terminal dipeptides sequentially from polypeptides having unsubstituted N-termini provided that the penultimate residue is proline. The polypeptide is Xaa-Pro dipeptidyl-peptidase (Streptococcus thermophilus (strain CNRZ 1066)).